Consider the following 424-residue polypeptide: GTPase Obg (424 aa).

Residues 1–158 (MFVDRARIYI…LWVILELKLL (158 aa)) enclose the Obg domain. An OBG-type G domain is found at 159–330 (ADVGLIGFPN…LIYYAAQKLK (172 aa)). Residues 165–172 (GFPNVGKS), 190–194 (FTTIN), 212–215 (DIPG), 282–285 (NKMD), and 311–313 (SAA) contribute to the GTP site. Residues Ser172 and Thr192 each coordinate Mg(2+). Residues 347-424 (YTAVEEEPFN…MYDLEFEYFR (78 aa)) enclose the OCT domain.

The protein belongs to the TRAFAC class OBG-HflX-like GTPase superfamily. OBG GTPase family. As to quaternary structure, monomer. Requires Mg(2+) as cofactor.

It localises to the cytoplasm. Its function is as follows. An essential GTPase which binds GTP, GDP and possibly (p)ppGpp with moderate affinity, with high nucleotide exchange rates and a fairly low GTP hydrolysis rate. Plays a role in control of the cell cycle, stress response, ribosome biogenesis and in those bacteria that undergo differentiation, in morphogenesis control. In Acetivibrio thermocellus (strain ATCC 27405 / DSM 1237 / JCM 9322 / NBRC 103400 / NCIMB 10682 / NRRL B-4536 / VPI 7372) (Clostridium thermocellum), this protein is GTPase Obg.